We begin with the raw amino-acid sequence, 313 residues long: Porphobilinogen deaminase (313 aa).

Cys249 is modified (S-(dipyrrolylmethanemethyl)cysteine).

Belongs to the HMBS family. In terms of assembly, monomer. Requires dipyrromethane as cofactor.

It carries out the reaction 4 porphobilinogen + H2O = hydroxymethylbilane + 4 NH4(+). It functions in the pathway porphyrin-containing compound metabolism; protoporphyrin-IX biosynthesis; coproporphyrinogen-III from 5-aminolevulinate: step 2/4. In terms of biological role, tetrapolymerization of the monopyrrole PBG into the hydroxymethylbilane pre-uroporphyrinogen in several discrete steps. The sequence is that of Porphobilinogen deaminase from Paracoccus denitrificans (strain Pd 1222).